We begin with the raw amino-acid sequence, 514 residues long: Membrane-bound lytic murein transglycosylase F (514 aa).

Positions 1 to 30 (MKKLKINYLFIGILTLLLAAALWPSIPWFG) are cleaved as a signal peptide. Residues 31–269 (KTENHIAAIQ…RIEEKYLGHG (239 aa)) are non-LT domain. The tract at residues 270–514 (DDFDYVDTRS…LFTPQKKEEK (245 aa)) is LT domain. Residue Glu314 is part of the active site.

In the N-terminal section; belongs to the bacterial solute-binding protein 3 family. The protein in the C-terminal section; belongs to the transglycosylase Slt family.

The protein localises to the cell outer membrane. The enzyme catalyses Exolytic cleavage of the (1-&gt;4)-beta-glycosidic linkage between N-acetylmuramic acid (MurNAc) and N-acetylglucosamine (GlcNAc) residues in peptidoglycan, from either the reducing or the non-reducing ends of the peptidoglycan chains, with concomitant formation of a 1,6-anhydrobond in the MurNAc residue.. Its function is as follows. Murein-degrading enzyme that degrades murein glycan strands and insoluble, high-molecular weight murein sacculi, with the concomitant formation of a 1,6-anhydromuramoyl product. Lytic transglycosylases (LTs) play an integral role in the metabolism of the peptidoglycan (PG) sacculus. Their lytic action creates space within the PG sacculus to allow for its expansion as well as for the insertion of various structures such as secretion systems and flagella. The protein is Membrane-bound lytic murein transglycosylase F of Salmonella paratyphi B (strain ATCC BAA-1250 / SPB7).